The following is a 449-amino-acid chain: MANVVENLGKLERRVTISLPKDVVQKEIDARIQKLAKNVRMPGFRPGKVPLKMVAQQYAGQVEAEVLSDKIGQEFFTISRAENLRVAGQPSFAPKEDTQQESAYAFDATFEVYPEVKIGDLATAEVERSTTTIGDAEIDRTLDILRKQRVHFHARGEGGEHGDGGADTAAQNGDRVTVDFVGKIDGVAFQGGTAEDFVFVLGEGRMLPEFETAALGLKAGESREFDLKFPDDYHGKDVAGKTAQFTVTLKKVEWPHLPEIDADFAKSLGVEDGDLTKMRAEIKENLEREAKRRTQSIVKNQVMDALLKISELDVPKALIEQDQQRLVEMARQDLAQRGVPNAKDAPIPAEMFADQAERRVKLGLVLAELVKANGLEAKPEQIRAEVDEFAKSYEDPKEVVRWYYSNQQRLAEMEAFVVESNVVDFVLGKAKVTDKEVSFEALASATAQA.

The PPIase FKBP-type domain maps to 173–258 (GDRVTVDFVG…LKKVEWPHLP (86 aa)).

It belongs to the FKBP-type PPIase family. Tig subfamily.

It is found in the cytoplasm. It catalyses the reaction [protein]-peptidylproline (omega=180) = [protein]-peptidylproline (omega=0). In terms of biological role, involved in protein export. Acts as a chaperone by maintaining the newly synthesized protein in an open conformation. Functions as a peptidyl-prolyl cis-trans isomerase. The chain is Trigger factor from Burkholderia mallei (strain NCTC 10229).